A 1631-amino-acid chain; its full sequence is ABC transporter A family member 6 (1631 aa).

Transmembrane regions (helical) follow at residues 25 to 45, 242 to 262, 285 to 305, 317 to 337, 346 to 366, 372 to 392, and 416 to 436; these read ICCE…ILAL, SVFI…DVVI, SWII…VVIF, GIVI…SFIF, FCGL…IFVS, VSVK…SIYI, and ILML…FEKV. Positions 491 to 724 constitute an ABC transporter 1 domain; sequence ISIRNLRKEF…FGQGYLLTCN (234 aa). 527-534 provides a ligand contact to ATP; it reads GPNGCGKS. Helical transmembrane passes span 866 to 886, 1047 to 1067, 1099 to 1119, 1127 to 1147, 1158 to 1178, 1198 to 1218, and 1242 to 1262; these read SFFL…ILYK, AIIY…GSFA, WDFF…AGVI, FGSF…LGYL, AVGA…IASL, IIDL…IVFI, and LGTP…WILL. The region spanning 1309-1544 is the ABC transporter 2 domain; sequence IQFKNLHKLF…FGAGYSIDVK (236 aa). Residue 1347-1354 coordinates ATP; sequence GLNGGGKS.

Belongs to the ABC transporter superfamily. ABCA family.

It localises to the membrane. The sequence is that of ABC transporter A family member 6 (abcA6) from Dictyostelium discoideum (Social amoeba).